Reading from the N-terminus, the 1007-residue chain is Ephrin type-A receptor 10 (1007 aa).

Positions 1-22 (METGAGPHPLRLFVCLIPLCLA) are cleaved as a signal peptide. Topologically, residues 23–565 (LLLGPGRPGT…APGSRDQSPA (543 aa)) are extracellular. The region spanning 35–216 (EVILLDSKAS…YYKQCRATVR (182 aa)) is the Eph LBD domain. Asparagine 311 carries an N-linked (GlcNAc...) asparagine glycan. Disordered stretches follow at residues 323-343 (ARSPTDPPSASCTRPPSAPRD) and 467-486 (PQSVSLSWREPVPAGAPGTN). Fibronectin type-III domains are found at residues 340 to 452 (APRD…TGPG) and 456 to 554 (EEDE…TPGE). Asparagine 486 carries an N-linked (GlcNAc...) asparagine glycan. Residues 566–586 (VVVTVVTISALLVLGSVMSVL) form a helical membrane-spanning segment. Topologically, residues 587-1007 (AIWRRPCDGK…LQLQGQGVQV (421 aa)) are cytoplasmic. The 256-residue stretch at 644-899 (VTLEKSLGAG…PRFSQIHSIL (256 aa)) folds into the Protein kinase domain. Residues 932–996 (PSFGSVGAWL…LSGISALQTR (65 aa)) enclose the SAM domain.

It belongs to the protein kinase superfamily. Tyr protein kinase family. Ephrin receptor subfamily. Expressed in the cochlea, in the organ of Corti, spiral ganglion, and stria vascularis.

It localises to the cell membrane. It carries out the reaction L-tyrosyl-[protein] + ATP = O-phospho-L-tyrosyl-[protein] + ADP + H(+). Its function is as follows. Receptor for members of the ephrin-A family. Binds to EFNA3, EFNA4 and EFNA5. This Mus musculus (Mouse) protein is Ephrin type-A receptor 10 (Epha10).